Reading from the N-terminus, the 426-residue chain is Fc receptor-like B (426 aa).

The first 17 residues, 1 to 17 (MWPLTALLLLVPSSGQA), serve as a signal peptide directing secretion. 2 consecutive Ig-like C2-type domains span residues 23–101 (PILS…LSVS) and 103–189 (DWLI…VAVT). Disulfide bonds link Cys44–Cys85 and Cys124–Cys168. Asn152 carries an N-linked (GlcNAc...) asparagine glycan. The segment at 400–426 (ELRGTPETPTSHFAVSPGTPETTPVES) is disordered. The span at 406-426 (ETPTSHFAVSPGTPETTPVES) shows a compositional bias: polar residues.

Expressed at low levels. Expressed in B-lymphocytes. Detected in tonsil, lung, kidney, spleen and placenta. Expressed by a small subset of germinal center B-cells in tonsils and by melanocytes (at protein level).

The protein localises to the cytoplasm. Its subcellular location is the endoplasmic reticulum. In Homo sapiens (Human), this protein is Fc receptor-like B (FCRLB).